The following is a 273-amino-acid chain: Nicotinamide N-methyltransferase (273 aa).

S-adenosyl-L-methionine contacts are provided by residues tyrosine 35, tyrosine 40, 74–75 (GA), tyrosine 80, aspartate 96, asparagine 101, and 152–153 (NV).

This sequence belongs to the class I-like SAM-binding methyltransferase superfamily. NNMT/PNMT/TEMT family.

The enzyme catalyses nicotinamide + S-adenosyl-L-methionine = 1-methylnicotinamide + S-adenosyl-L-homocysteine. Its function is as follows. Catalyzes the N-methylation of nicotinamide and other pyridines to form pyridinium ions. Involved in regulation of lifespan extension downstream of the sirtuin sir-2.1, probably through its role in nicotinic acid metabolism. This is Nicotinamide N-methyltransferase from Caenorhabditis elegans.